Reading from the N-terminus, the 309-residue chain is Ubiquitin-conjugating enzyme E2 32 (309 aa).

The UBC core domain occupies 11-166 (PAVKRILQEV…ERQKIIDEIH (156 aa)). Cys93 acts as the Glycyl thioester intermediate in catalysis. Residues 275–295 (FTWAAVGLTIAIMVLLLKKFI) form a helical membrane-spanning segment.

It belongs to the ubiquitin-conjugating enzyme family.

The protein resides in the membrane. The catalysed reaction is S-ubiquitinyl-[E1 ubiquitin-activating enzyme]-L-cysteine + [E2 ubiquitin-conjugating enzyme]-L-cysteine = [E1 ubiquitin-activating enzyme]-L-cysteine + S-ubiquitinyl-[E2 ubiquitin-conjugating enzyme]-L-cysteine.. Its pathway is protein modification; protein ubiquitination. Accepts the ubiquitin from the E1 complex and catalyzes its covalent attachment to other proteins. The polypeptide is Ubiquitin-conjugating enzyme E2 32 (UBC32) (Arabidopsis thaliana (Mouse-ear cress)).